The chain runs to 872 residues: N-acetyltransferase eso1 (872 aa).

The tract at residues methionine 1–arginine 591 is polymerase type-Y. Residues valine 29–glycine 285 form the UmuC domain. Residues serine 533–lysine 567 form a UBZ3-type zinc finger. Positions 540, 543, 555, and 559 each coordinate Zn(2+). Residues arginine 569–serine 602 are disordered. The segment covering glutamine 583–serine 595 has biased composition (basic residues). Residues lysine 592–serine 872 are acetyltransferase. Residues valine 653 to histidine 677 form a CCHH-type zinc finger.

It in the C-terminal section; belongs to the acetyltransferase family. ECO subfamily. The protein in the N-terminal section; belongs to the DNA polymerase type-Y family. Interacts with pds5.

It localises to the nucleus. Probable acetyltransferase required for the establishment of sister chromatid cohesion and couple the processes of cohesion and DNA replication to ensure that only sister chromatids become paired together. In contrast to the structural cohesins, the deposition and establishment factors are required only during S phase. The relevance of acetyltransferase function remains unclear. This is N-acetyltransferase eso1 (eso1) from Schizosaccharomyces pombe (strain 972 / ATCC 24843) (Fission yeast).